The following is a 386-amino-acid chain: Cell division protein FtsZ (386 aa).

GTP is bound by residues 21–25 (GGGGN), 108–110 (GTG), E139, R143, and N187.

Belongs to the FtsZ family. As to quaternary structure, homodimer. Polymerizes to form a dynamic ring structure in a strictly GTP-dependent manner. Interacts directly with several other division proteins.

The protein localises to the cytoplasm. In terms of biological role, essential cell division protein that forms a contractile ring structure (Z ring) at the future cell division site. The regulation of the ring assembly controls the timing and the location of cell division. One of the functions of the FtsZ ring is to recruit other cell division proteins to the septum to produce a new cell wall between the dividing cells. Binds GTP and shows GTPase activity. The polypeptide is Cell division protein FtsZ (Coxiella burnetii (strain RSA 493 / Nine Mile phase I)).